A 486-amino-acid polypeptide reads, in one-letter code: Glutamyl-tRNA(Gln) amidotransferase subunit A (486 aa).

Catalysis depends on charge relay system residues lysine 76 and serine 151. Serine 175 serves as the catalytic Acyl-ester intermediate.

The protein belongs to the amidase family. GatA subfamily. In terms of assembly, heterotrimer of A, B and C subunits.

It catalyses the reaction L-glutamyl-tRNA(Gln) + L-glutamine + ATP + H2O = L-glutaminyl-tRNA(Gln) + L-glutamate + ADP + phosphate + H(+). In terms of biological role, allows the formation of correctly charged Gln-tRNA(Gln) through the transamidation of misacylated Glu-tRNA(Gln) in organisms which lack glutaminyl-tRNA synthetase. The reaction takes place in the presence of glutamine and ATP through an activated gamma-phospho-Glu-tRNA(Gln). The polypeptide is Glutamyl-tRNA(Gln) amidotransferase subunit A (Chromohalobacter salexigens (strain ATCC BAA-138 / DSM 3043 / CIP 106854 / NCIMB 13768 / 1H11)).